Reading from the N-terminus, the 76-residue chain is Bowman-Birk type proteinase inhibitor DE-3 (76 aa).

Intrachain disulfides connect cysteine 16-cysteine 70, cysteine 17-cysteine 32, cysteine 20-cysteine 66, cysteine 22-cysteine 30, cysteine 40-cysteine 47, cysteine 44-cysteine 59, and cysteine 49-cysteine 57.

This sequence belongs to the Bowman-Birk serine protease inhibitor family.

This chain is Bowman-Birk type proteinase inhibitor DE-3, found in Macrotyloma axillare (Perennial horse gram).